The following is a 105-amino-acid chain: Urease subunit beta (105 aa).

Belongs to the urease beta subunit family. As to quaternary structure, heterotrimer of UreA (gamma), UreB (beta) and UreC (alpha) subunits. Three heterotrimers associate to form the active enzyme.

The protein localises to the cytoplasm. The catalysed reaction is urea + 2 H2O + H(+) = hydrogencarbonate + 2 NH4(+). It functions in the pathway nitrogen metabolism; urea degradation; CO(2) and NH(3) from urea (urease route): step 1/1. This chain is Urease subunit beta, found in Pseudomonas entomophila (strain L48).